The primary structure comprises 807 residues: Ecotropic viral integration site 5 ortholog (807 aa).

The disordered stretch occupies residues 1-31 (MTLTTTTTASSAESQAKMDVKGGALPGEENL). The residue at position 33 (threonine 33) is a Phosphothreonine. Phosphoserine occurs at positions 58 and 64. Residues 116–300 (GIPHHFRAIV…RIMDVFLSEG (185 aa)) enclose the Rab-GAP TBC domain. Coiled-coil stretches lie at residues 352 to 463 (SIKL…ENNV), 494 to 583 (CLLE…ENQR), and 627 to 772 (REME…RGKF).

In terms of assembly, interacts with Rab11.

It is found in the cytoplasm. The protein localises to the endosome. Functionally, functions as a GTPase-activating protein (GAP). During border cell migration in the ovary, acts as a GAP for Rab11 and is necessary for the maintenance of active receptor tyrosine kinases at the leading edge. The sequence is that of Ecotropic viral integration site 5 ortholog (Evi5) from Drosophila melanogaster (Fruit fly).